The sequence spans 286 residues: Homoserine kinase (286 aa).

ATP is bound at residue 78–88; it reads PLARGLGSSSS.

The protein belongs to the GHMP kinase family. Homoserine kinase subfamily.

Its subcellular location is the cytoplasm. The enzyme catalyses L-homoserine + ATP = O-phospho-L-homoserine + ADP + H(+). Its pathway is amino-acid biosynthesis; L-threonine biosynthesis; L-threonine from L-aspartate: step 4/5. Functionally, catalyzes the ATP-dependent phosphorylation of L-homoserine to L-homoserine phosphate. This Streptococcus thermophilus (strain CNRZ 1066) protein is Homoserine kinase.